An 817-amino-acid chain; its full sequence is MSGTQNNDMKRQFLLERLLDAVKQCQIRFGGRKEIASDSDSRVTCLCAQFEAVLQHGLKRSRGLALTAAAIKQAAGFASKTETEPVFWFYVKEVLSKHELQRFHALRHIASDVGRGRAWLRCALNENSLERYLHMLLADRGRLSTFYEDWAFVMDEERSSMLPTMAAGLNSILFAINIDNKDLNGQSKFAPTVSDLLKESTQNVTSLLKESTQGVSSLFREITASSAVSILSRAEQETDPLPVVSKHVSADAKCKRERKKKKKVTNIISFDDEEDEQSSGDVFKKIPGAGESSEENSDRSSINIMSAFESPFGPNSNGSQGSNSWKIDSLSLNGEFGYQKLDVKSIDDEDADENEDDVCGSMPGRKRPGHSESPEKPLDAGTCLSQMHGWAPLQVLHGHAEVLFPVSGVGSYGPADAPLGSLENGTGPEDHILPEPGPRYSVEASPPGQESPLSSLLPSASVPESMTVSDLRQAIVAMMNRKDELEEENRSLRNLLDGEMEHSAALRQEVDTLKRKVAEQEERHVTKVQALARENEVLKVQLKKYVGAVQMLKREGQTAEVVPNLWNIDGEVTVPEQKPGEVAEELTSSYERKLIEVAEMHGELIEFNERLHRALVAKEALVSQMRQELIDLRGPVPGDLSQTSEDQSLSDFEISNRALINVWIPSVFLRGKAANAFHVYQVYIRIKDDEWNVYRRYAEFRTLHHKLQNKYPQVRAFNFPPKKAIGNKDAKFVEERRKQLQTYLRSVMNKVIQAVPEFTASPQKETLTQLMPFFVDITPPGDALTKNSRPKVASRFPKLARGHPRETRNVEPQSGDL.

One can recognise an RUN domain in the interval 37–181 (SDSDSRVTCL…ILFAINIDNK (145 aa)). Ser269, Ser292, Ser293, Ser331, and Ser345 each carry phosphoserine. The segment at 271–299 (DDEEDEQSSGDVFKKIPGAGESSEENSDR) is disordered. Disordered regions lie at residues 344 to 381 (KSID…LDAG) and 417 to 460 (APLG…LPSA). Over residues 347-358 (DDEDADENEDDV) the composition is skewed to acidic residues. Positions 369–378 (GHSESPEKPL) are enriched in basic and acidic residues. The span at 445 to 460 (SPPGQESPLSSLLPSA) shows a compositional bias: low complexity. Ser451 carries the post-translational modification Phosphoserine. The stretch at 466 to 546 (MTVSDLRQAI…VLKVQLKKYV (81 aa)) forms a coiled coil. Ser641 carries the phosphoserine modification. A Phosphothreonine modification is found at Thr643. Residues Ser644 and Ser648 each carry the phosphoserine modification. The 124-residue stretch at 658–781 (ALINVWIPSV…PFFVDITPPG (124 aa)) folds into the PX domain. The tract at residues 784 to 817 (LTKNSRPKVASRFPKLARGHPRETRNVEPQSGDL) is disordered.

Belongs to the sorting nexin family.

This chain is Sorting nexin-29 (SNX29), found in Bos taurus (Bovine).